A 116-amino-acid chain; its full sequence is Small ribosomal subunit protein uS10m (116 aa).

Belongs to the universal ribosomal protein uS10 family.

It is found in the mitochondrion. The sequence is that of Small ribosomal subunit protein uS10m (RPS10) from Reclinomonas americana.